The sequence spans 173 residues: RNA pyrophosphohydrolase (173 aa).

In terms of domain architecture, Nudix hydrolase spans 11 to 164; it reads PYRRSVGILV…KKHVYMKIVN (154 aa). Residues 52 to 73 carry the Nudix box motif; it reads GGIDENEEPLDAARRELYEETG.

The protein belongs to the Nudix hydrolase family. RppH subfamily. Requires a divalent metal cation as cofactor.

Its function is as follows. Accelerates the degradation of transcripts by removing pyrophosphate from the 5'-end of triphosphorylated RNA, leading to a more labile monophosphorylated state that can stimulate subsequent ribonuclease cleavage. This chain is RNA pyrophosphohydrolase, found in Bartonella henselae (strain ATCC 49882 / DSM 28221 / CCUG 30454 / Houston 1) (Rochalimaea henselae).